The primary structure comprises 345 residues: Protein Tob1 (345 aa).

Residues 22-39 (RRRVNIFGEELERLLKKK) carry the Bipartite nuclear localization signal motif. The interval 82–92 (VRGNLPQDLSV) is important for nuclear localization. Residues 144-160 (DPASSVSSSPSPPFGHS) are compositionally biased toward low complexity. The disordered stretch occupies residues 144 to 171 (DPASSVSSSPSPPFGHSAAVSPTFMPRS). Residues 161–218 (AAVSPTFMPRSTQPLTFTTATFAATKFGSTKMKNSGRSNKVARTSPINLGLNVNDLLK) form a required for interaction with CPEB3 region. T204 is modified (phosphothreonine). Positions 226–234 (MHSLYGLGL) match the Nuclear export signal motif. Residues 231-267 (GLGLGSQQQPQQQQQPAQPPPPPPPPQQQQQQKTSAL) are disordered. Positions 237-246 (QQQPQQQQQP) are enriched in low complexity. Over residues 247-257 (AQPPPPPPPPQ) the composition is skewed to pro residues.

It belongs to the BTG family. In terms of assembly, interacts with ERBB2. Interacts with CNOT7. Interacts with CPEB3 (via C-terminal RNA-binding region); recruits CNOT7 to CPEB3 to form a ternary complex required for mRNA deadenylation and decay. Interacts with CNOT8. Interacts with CPEB4. Post-translationally, phosphorylated on Ser and Thr residues. In terms of tissue distribution, ubiquitous.

It localises to the cytoplasm. It is found in the nucleus. Its function is as follows. Anti-proliferative protein; the function is mediated by association with deadenylase subunits of the CCR4-NOT complex. Mediates CPEB3-accelerated mRNA deadenylation by binding to CPEB3 and recruiting CNOT7 which leads to target mRNA deadenylation and decay. The chain is Protein Tob1 (TOB1) from Homo sapiens (Human).